Reading from the N-terminus, the 133-residue chain is ATP synthase epsilon chain, chloroplastic (133 aa).

It belongs to the ATPase epsilon chain family. In terms of assembly, F-type ATPases have 2 components, CF(1) - the catalytic core - and CF(0) - the membrane proton channel. CF(1) has five subunits: alpha(3), beta(3), gamma(1), delta(1), epsilon(1). CF(0) has three main subunits: a, b and c.

It is found in the plastid. The protein localises to the chloroplast thylakoid membrane. In terms of biological role, produces ATP from ADP in the presence of a proton gradient across the membrane. In Ipomoea batatas (Sweet potato), this protein is ATP synthase epsilon chain, chloroplastic.